A 55-amino-acid chain; its full sequence is Cytochrome c oxidase subunit 7s (55 aa).

Residues 13–35 form a helical membrane-spanning segment; it reads LVQDIGVALILGSIAGCFFKYGV.

Slime mold cytochrome c oxidase consists of at least seven different polypeptides species, subunits I, II, III, IV, V, VI, and VIIe/s in order of MW.

Its subcellular location is the mitochondrion inner membrane. It carries out the reaction 4 Fe(II)-[cytochrome c] + O2 + 8 H(+)(in) = 4 Fe(III)-[cytochrome c] + 2 H2O + 4 H(+)(out). Its function is as follows. This protein is one of the nuclear-coded polypeptide chains of cytochrome c oxidase, the terminal oxidase in mitochondrial electron transport. This Dictyostelium discoideum (Social amoeba) protein is Cytochrome c oxidase subunit 7s (cxgS).